A 1360-amino-acid polypeptide reads, in one-letter code: Transmembrane protein 94 (1360 aa).

The Cytoplasmic portion of the chain corresponds to 1–64; that stretch reads MDLREKHLGE…FLHLSNRCSC (64 aa). The chain crosses the membrane as a helical span at residues 65–85; the sequence is FHWPGASLMLLAVLLLLCCCG. Residues 86 to 92 lie on the Lumenal side of the membrane; the sequence is GQPAGSQ. A helical transmembrane segment spans residues 93–113; that stretch reads GVELVNASALFLLLLLNLVLI. Residues 114-273 lie on the Cytoplasmic side of the membrane; it reads GRQDRLKRRE…RPVTALDNER (160 aa). Phosphoserine occurs at positions 221 and 225. The chain crosses the membrane as a helical span at residues 274-294; the sequence is FTVQSVMLHYAVPVVLAGFLI. Residues 295-320 are Lumenal-facing; sequence TNALRFMFKAPGVTSWQYTLLQLQVN. The chain crosses the membrane as a helical span at residues 321-341; sequence GMLPILPLLFPVLWVLATACG. Residues 342-1096 lie on the Cytoplasmic side of the membrane; sequence EARVLAQMSK…RHATYGIRKC (755 aa). A DKQGIL motif is present at residues 417–422; it reads DKQGIL. Phosphoserine occurs at positions 444, 445, and 454. Residues 487–545 are disordered; that stretch reads EQERSDWLADGPKPSEPYPHHKGHGRSKHPSGSNVSFSRDTEGGEEEPSKAQPGTEGDP. Residues 506–515 show a composition bias toward basic residues; that stretch reads HHKGHGRSKH. Serine 517, serine 522, serine 802, and serine 945 each carry phosphoserine. The chain crosses the membrane as a helical span at residues 1097–1117; it reads FLFLLQCQLTLVVIQFLSCLV. Residues 1118–1124 are Lumenal-facing; sequence QLPPLLS. A helical transmembrane segment spans residues 1125-1145; sequence TTDILWLSCFCYPLLSISLLG. Topologically, residues 1146 to 1171 are cytoplasmic; that stretch reads KPPHSSIMSMATGKNLQSIPKKTQHY. Residues 1172–1192 traverse the membrane as a helical segment; that stretch reads FLLCFLLKFSLTISSCLVCFG. Residues 1193 to 1232 are Lumenal-facing; it reads FTLQSFCDSARARNLTNCSSVMLCSNDDRAPAWFEDFANG. N-linked (GlcNAc...) asparagine glycans are attached at residues asparagine 1206 and asparagine 1209. The helical transmembrane segment at 1233 to 1253 threads the bilayer; sequence LLSAQKLTAALIVLHTVFISI. The Cytoplasmic portion of the chain corresponds to 1254 to 1269; the sequence is THVHRTKPLWRKSPLT. A helical membrane pass occupies residues 1270 to 1290; the sequence is NLWWAVTVPVVLLGQVVQTVV. Over 1291–1310 the chain is Lumenal; that stretch reads DLQLWTHRDSRVHFGLEDVP. Residues 1311–1331 traverse the membrane as a helical segment; that stretch reads LLTWLLGCLSLVLVVVTNEIV. The Cytoplasmic segment spans residues 1332–1360; the sequence is KLHEIRVRVRYQKRQKLQFETKLGMNSPF. The GMN; metal-binding motif motif lies at 1355-1357; that stretch reads GMN.

Forms homooligomers.

The protein resides in the endoplasmic reticulum membrane. Functionally, could function in the uptake of Mg(2+) from the cytosol into the endoplasmic reticulum and regulate intracellular Mg(2+) homeostasis. The chain is Transmembrane protein 94 from Mus musculus (Mouse).